The sequence spans 209 residues: NADH-quinone oxidoreductase subunit C (209 aa).

This sequence belongs to the complex I 30 kDa subunit family. As to quaternary structure, NDH-1 is composed of 14 different subunits. Subunits NuoB, C, D, E, F, and G constitute the peripheral sector of the complex.

Its subcellular location is the cell inner membrane. It catalyses the reaction a quinone + NADH + 5 H(+)(in) = a quinol + NAD(+) + 4 H(+)(out). In terms of biological role, NDH-1 shuttles electrons from NADH, via FMN and iron-sulfur (Fe-S) centers, to quinones in the respiratory chain. The immediate electron acceptor for the enzyme in this species is believed to be ubiquinone. Couples the redox reaction to proton translocation (for every two electrons transferred, four hydrogen ions are translocated across the cytoplasmic membrane), and thus conserves the redox energy in a proton gradient. This Xanthobacter autotrophicus (strain ATCC BAA-1158 / Py2) protein is NADH-quinone oxidoreductase subunit C.